Consider the following 327-residue polypeptide: Biotin synthase (327 aa).

Residues 49 to 273 (FNKDKIDLCS…ICIARIALPD (225 aa)) form the Radical SAM core domain. 3 residues coordinate [4Fe-4S] cluster: C67, C71, and C74. [2Fe-2S] cluster contacts are provided by S110, C142, C201, and R277.

It belongs to the radical SAM superfamily. Biotin synthase family. As to quaternary structure, homodimer. It depends on [4Fe-4S] cluster as a cofactor. [2Fe-2S] cluster is required as a cofactor.

The enzyme catalyses (4R,5S)-dethiobiotin + (sulfur carrier)-SH + 2 reduced [2Fe-2S]-[ferredoxin] + 2 S-adenosyl-L-methionine = (sulfur carrier)-H + biotin + 2 5'-deoxyadenosine + 2 L-methionine + 2 oxidized [2Fe-2S]-[ferredoxin]. The protein operates within cofactor biosynthesis; biotin biosynthesis; biotin from 7,8-diaminononanoate: step 2/2. Catalyzes the conversion of dethiobiotin (DTB) to biotin by the insertion of a sulfur atom into dethiobiotin via a radical-based mechanism. The sequence is that of Biotin synthase from Methanococcus maripaludis (strain C6 / ATCC BAA-1332).